The chain runs to 457 residues: Multidrug resistance protein MdtK (457 aa).

The Cytoplasmic portion of the chain corresponds to 1 to 10 (MQKYISEARL). Residues 11 to 31 (LLALAIPVILAQIAQTAMGFV) traverse the membrane as a helical segment. Residues 32 to 52 (DTVMAGGYSATDMAAVAIGTS) are Periplasmic-facing. A helical transmembrane segment spans residues 53–73 (IWLPAILFGHGLLLALTPVIA). Residues 74 to 92 (QLNGSGRRERIAHQVRQGF) lie on the Cytoplasmic side of the membrane. A helical membrane pass occupies residues 93–113 (WLAGFVSVLIMLVLWNAGYII). Topologically, residues 114–126 (RSMENIDPALADK) are periplasmic. Residues 127–147 (AVGYLRALLWGAPGYLFFQVA) form a helical membrane-spanning segment. At 148–159 (RNQCEGLAKTKP) the chain is on the cytoplasmic side. A helical transmembrane segment spans residues 160–180 (GMVMGFIGLLVNIPVNYIFIY). Residues 181 to 191 (GHFGMPELSGV) are Periplasmic-facing. A helical membrane pass occupies residues 192–212 (GCGVATAAVYWAMFLAMVSYI). At 213–242 (KRARSMRDIRNEKGTAKPDPAVMKRLIQLG) the chain is on the cytoplasmic side. The chain crosses the membrane as a helical span at residues 243 to 263 (LPIALALFFEVTLFAVVALLV). Over 264 to 275 (SPLGIVDVAGHQ) the chain is Periplasmic. Residues 276 to 296 (IALNFSSLMFVLPMSLAAAVT) form a helical membrane-spanning segment. Residues 297–313 (IRVGYRLGQGSTLDAQT) lie on the Cytoplasmic side of the membrane. Residues 314–334 (AARTGLMVGVCMATLTAIFTV) form a helical membrane-spanning segment. Residues 335 to 349 (SLREQIALLYNDNPE) are Periplasmic-facing. A helical transmembrane segment spans residues 350-370 (VVTLAAHLMLLAAVYQISDSI). The Cytoplasmic portion of the chain corresponds to 371–386 (QVIGSGILRGYKDTRS). A helical membrane pass occupies residues 387-407 (IFYITFTAYWVLGLPSGYILA). The Periplasmic segment spans residues 408 to 417 (LTDLVVEPMG). Residues 418–438 (PAGFWIGFIIGLTSAAIMMML) traverse the membrane as a helical segment. Topologically, residues 439–457 (RMRFLQRLPSAIILQRASR) are cytoplasmic.

It belongs to the multi antimicrobial extrusion (MATE) (TC 2.A.66.1) family. MdtK subfamily.

The protein resides in the cell inner membrane. Multidrug efflux pump that functions probably as a Na(+)/drug antiporter. This chain is Multidrug resistance protein MdtK, found in Shigella dysenteriae serotype 1 (strain Sd197).